Reading from the N-terminus, the 306-residue chain is Probable protein ABIL1 (306 aa).

Residues 200-236 form a disordered region; the sequence is KNSKTNGARQSEFVLEETKATKPASRGKEPSTSPLPK.

It belongs to the ABI family. As to quaternary structure, binds SCAR.

It localises to the cytoplasm. The protein localises to the cytoskeleton. Involved in regulation of actin and microtubule organization. Part of a WAVE complex that activates the Arp2/3 complex. This Oryza sativa subsp. japonica (Rice) protein is Probable protein ABIL1.